A 200-amino-acid chain; its full sequence is MELMVKGANALTVSETTFGREFNEALVHQVVVAYAAGARQGTRAQKTRSEVSGGGAKPWRQKGTGRARAGTIRSPIWRTGGVTFAAKPQDHSQKVNKKMYRGAMKSILSELVRQERLIVVENFSVEAPKTKALVAKLKELELNDVLIVTGEVDENLFLAARNLYKVDVRDVTGIDPVSLIAFDKVLMTAAAVKQVEEMLA.

A disordered region spans residues 42-65 (TRAQKTRSEVSGGGAKPWRQKGTG).

It belongs to the universal ribosomal protein uL4 family. In terms of assembly, part of the 50S ribosomal subunit.

In terms of biological role, one of the primary rRNA binding proteins, this protein initially binds near the 5'-end of the 23S rRNA. It is important during the early stages of 50S assembly. It makes multiple contacts with different domains of the 23S rRNA in the assembled 50S subunit and ribosome. Its function is as follows. Forms part of the polypeptide exit tunnel. This Vibrio cholerae serotype O1 (strain ATCC 39541 / Classical Ogawa 395 / O395) protein is Large ribosomal subunit protein uL4.